A 242-amino-acid polypeptide reads, in one-letter code: uncharacterized protein (242 aa).

This is an uncharacterized protein from Acanthamoeba polyphaga mimivirus (APMV).